The sequence spans 68 residues: Large ribosomal subunit protein uL29 (68 aa).

This sequence belongs to the universal ribosomal protein uL29 family.

The polypeptide is Large ribosomal subunit protein uL29 (Erythrobacter litoralis (strain HTCC2594)).